We begin with the raw amino-acid sequence, 610 residues long: UvrABC system protein C (610 aa).

In terms of domain architecture, GIY-YIG spans 16 to 94; the sequence is SQPGVYRMYD…IKLYQPRYNV (79 aa). Positions 204–239 constitute a UVR domain; the sequence is DQVLTQLIARMEKASQNLEFEEAARIRDQIQAVRRV.

It belongs to the UvrC family. Interacts with UvrB in an incision complex.

It localises to the cytoplasm. Functionally, the UvrABC repair system catalyzes the recognition and processing of DNA lesions. UvrC both incises the 5' and 3' sides of the lesion. The N-terminal half is responsible for the 3' incision and the C-terminal half is responsible for the 5' incision. The sequence is that of UvrABC system protein C from Escherichia fergusonii (strain ATCC 35469 / DSM 13698 / CCUG 18766 / IAM 14443 / JCM 21226 / LMG 7866 / NBRC 102419 / NCTC 12128 / CDC 0568-73).